The primary structure comprises 257 residues: UPF0246 protein RHOS4_29700 (257 aa).

This sequence belongs to the UPF0246 family.

This Cereibacter sphaeroides (strain ATCC 17023 / DSM 158 / JCM 6121 / CCUG 31486 / LMG 2827 / NBRC 12203 / NCIMB 8253 / ATH 2.4.1.) (Rhodobacter sphaeroides) protein is UPF0246 protein RHOS4_29700.